Here is a 160-residue protein sequence, read N- to C-terminus: Protein max (160 aa).

Over residues 1-13 (MSDNDDIEVESDE) the composition is skewed to acidic residues. The segment at 1 to 40 (MSDNDDIEVESDEEQPRFQSAADKRAHHNALERKRRDHIK) is disordered. Residue S2 is modified to N-acetylserine. A phosphoserine mark is found at S2 and S11. One can recognise a bHLH domain in the interval 23–74 (DKRAHHNALERKRRDHIKDSFHSLRDSVPSLQGEKASRAQILDKATEYIQYM). Residues 29–40 (NALERKRRDHIK) are compositionally biased toward basic and acidic residues. K66 carries the post-translational modification N6-acetyllysine. A leucine-zipper region spans residues 81–102 (HQQDIDDLKRQNALLEQQVRAL). The tract at residues 105–160 (ARSSAQLQTNYPSSDNSLYTNAKGGTISAFDGGSDSSSESEPEEPQNRKKLRMEAS) is disordered. S107 is modified (phosphoserine). Residues 107–124 (SSAQLQTNYPSSDNSLYT) show a composition bias toward polar residues. N6-acetyllysine is present on residues K153 and K154.

This sequence belongs to the MAX family. In terms of assembly, efficient DNA binding requires dimerization with another bHLH protein. Binds DNA as a heterodimer with MYC or MAD. Part of the E2F6.com-1 complex in G0 phase composed of E2F6, MGA, MAX, TFDP1, CBX3, BAT8, EUHMTASE1, RING1, RNF2, MBLR, L3MBTL2 and YAF2. Component of some MLL1/MLL complex, at least composed of the core components KMT2A/MLL1, ASH2L, HCFC1/HCF1, WDR5 and RBBP5, as well as the facultative components BACC1, CHD8, E2F6, HSP70, INO80C, KANSL1, LAS1L, MAX, MCRS1, MGA, MYST1/MOF, PELP1, PHF20, PRP31, RING2, RUVB1/TIP49A, RUVB2/TIP49B, SENP3, TAF1, TAF4, TAF6, TAF7, TAF9 and TEX10. Interacts with SPAG9. The heterodimer MYC:MAX interacts with ABI1; the interaction may enhance MYC:MAX transcriptional activity. Post-translationally, phosphorylated.

The protein resides in the nucleus. The protein localises to the cell projection. It is found in the dendrite. Transcription regulator. Forms a sequence-specific DNA-binding protein complex with MYC or MAD which recognizes the core sequence 5'-CAC[GA]TG-3'. The MYC:MAX complex is a transcriptional activator, whereas the MAD:MAX complex is a repressor. May repress transcription via the recruitment of a chromatin remodeling complex containing H3 'Lys-9' histone methyltransferase activity. Represses MYC transcriptional activity from E-box elements. The chain is Protein max from Rattus norvegicus (Rat).